The chain runs to 2179 residues: Axotactin (2179 aa).

The N-terminal stretch at 1–18 (MAFPYIWALLPLICSASG) is a signal peptide. Residues 19–1816 (LSLPNMTSTD…DENKQEDSTQ (1798 aa)) are Extracellular-facing. N-linked (GlcNAc...) asparagine glycans are attached at residues Asn-23 and Asn-52. A disordered region spans residues 59 to 107 (GGLAGSSTGGQSLPDTGGGNSAGGSPAGGSSGTGGGGSNSGISGNNSAM). The span at 74-97 (TGGGNSAGGSPAGGSSGTGGGGSN) shows a compositional bias: gly residues. N-linked (GlcNAc...) asparagine glycosylation occurs at Asn-103. The region spanning 119-170 (CAGPGDPGPCKQYIYKWRYEPTTNECTNFIWGGCEGNPQNRFGTEAECLFHC) is the BPTI/Kunitz inhibitor domain. 3 disulfide bridges follow: Cys-119/Cys-170, Cys-128/Cys-152, and Cys-144/Cys-166. The tract at residues 201 to 220 (YTQSPAQSPDGMGGAEGGDG) is disordered. Residues 211-220 (GMGGAEGGDG) are compositionally biased toward gly residues. A Laminin G-like 1 domain is found at 242–438 (KTFIFAKNNT…TKHENVNEGC (197 aa)). An N-linked (GlcNAc...) asparagine glycan is attached at Asn-249. Cystine bridges form between Cys-405/Cys-438, Cys-442/Cys-455, Cys-449/Cys-464, and Cys-466/Cys-476. Residues 439–477 (SDMCESRHNLCFVGSRCINHYGGISCDCFGTHYEGEHCD) form the EGF-like 1 domain. 2 Laminin G-like domains span residues 481 to 664 (ATII…AEFV) and 660 to 839 (EAEF…LDNC). 3 N-linked (GlcNAc...) asparagine glycosylation sites follow: Asn-542, Asn-571, and Asn-741. 4 disulfides stabilise this stretch: Cys-808–Cys-839, Cys-845–Cys-857, Cys-851–Cys-866, and Cys-868–Cys-878. The EGF-like 2 domain occupies 841–879 (YIDPCKRPNTCEHGGKCFVKDDRVTCDCKHTGYIGKNCH). 4 N-linked (GlcNAc...) asparagine glycosylation sites follow: Asn-925, Asn-1000, Asn-1019, and Asn-1026. The Laminin G-like 4 domain maps to 1087–1259 (YVVTFTTSQS…VHLSEIIKDC (173 aa)). Cystine bridges form between Cys-1231–Cys-1259, Cys-1263–Cys-1274, Cys-1268–Cys-1283, and Cys-1285–Cys-1296. The 38-residue stretch at 1260 to 1297 (KPSCVPSPCRNGAQCKELWSSFKCVCNNPWAHIGEFCE) folds into the EGF-like 3 domain. Residues 1316–1526 (RNYLSVGATP…PTQEGVLPNC (211 aa)) form the Laminin G-like 5 domain. A glycan (N-linked (GlcNAc...) asparagine) is linked at Asn-1393. 4 disulfide bridges follow: Cys-1494–Cys-1526, Cys-1530–Cys-1541, Cys-1535–Cys-1552, and Cys-1554–Cys-1564. Positions 1527–1565 (QIKCDAEPCKNGGTCQEHFAEQLSTCDCEHTSFLGEFCS) constitute an EGF-like 4 domain. The Laminin G-like 6 domain maps to 1569–1765 (GADFSGESTL…NPQGVRSAQC (197 aa)). Asn-1667, Asn-1707, Asn-1751, and Asn-1782 each carry an N-linked (GlcNAc...) asparagine glycan. A disulfide bridge links Cys-1722 with Cys-1765. A helical membrane pass occupies residues 1817-1837 (VVFLTLTSVFVIIVICCLLEV). At 1838–2179 (YRSHLAYKKR…TSIDSILSLD (342 aa)) the chain is on the cytoplasmic side. 2 disordered regions span residues 1891–2141 (YTYK…PTLF) and 2156–2179 (SYLGGPRLQPRSNRTSIDSILSLD). Residues 1916–1930 (GSATPSQPGTPTALS) are compositionally biased toward polar residues. Residues 1940 to 1949 (EEEEEEEDEA) show a composition bias toward acidic residues. Positions 1954-1966 (AAEKSGENEEPPA) are enriched in basic and acidic residues. 2 stretches are compositionally biased toward polar residues: residues 1969–1981 (TTASEIKESQAQP) and 2010–2025 (EPSSQLNSAQNGQLAQ). Basic and acidic residues predominate over residues 2064–2079 (PQEHKSRHKATDDTEA). A compositionally biased stretch (low complexity) spans 2082–2091 (QQQQQQQQQQ). Polar residues-rich tracts occupy residues 2092-2105 (SFDVATNANGSSLP) and 2165-2179 (PRSNRTSIDSILSLD).

Its subcellular location is the cell projection. It is found in the axon. The protein localises to the membrane. Functionally, may have serine protease inhibitor activity. Might play a role in the glial-neuronal signaling pathway that is important in establishing the electrical properties of axonal membranes. The sequence is that of Axotactin from Drosophila melanogaster (Fruit fly).